The primary structure comprises 518 residues: Chromosomal replication initiator protein DnaA (518 aa).

The interval 1–72 (MTLAEFWPLC…VREELAAGRS (72 aa)) is domain I, interacts with DnaA modulators. Positions 72–180 (SAFVFKPGEG…DAEEARYEQT (109 aa)) are domain II. The domain III, AAA+ region stretch occupies residues 181–397 (NLSPDYTFDT…GAFNRVGASS (217 aa)). ATP is bound by residues Gly225, Gly227, Lys228, and Thr229. The interval 398–518 (RFMNRPVIDI…YEKLLILIQN (121 aa)) is domain IV, binds dsDNA.

The protein belongs to the DnaA family. In terms of assembly, oligomerizes as a right-handed, spiral filament on DNA at oriC.

Its subcellular location is the cytoplasm. Plays an essential role in the initiation and regulation of chromosomal replication. ATP-DnaA binds to the origin of replication (oriC) to initiate formation of the DNA replication initiation complex once per cell cycle. Binds the DnaA box (a 9 base pair repeat at the origin) and separates the double-stranded (ds)DNA. Forms a right-handed helical filament on oriC DNA; dsDNA binds to the exterior of the filament while single-stranded (ss)DNA is stabiized in the filament's interior. The ATP-DnaA-oriC complex binds and stabilizes one strand of the AT-rich DNA unwinding element (DUE), permitting loading of DNA polymerase. After initiation quickly degrades to an ADP-DnaA complex that is not apt for DNA replication. Binds acidic phospholipids. This is Chromosomal replication initiator protein DnaA from Neisseria meningitidis serogroup C / serotype 2a (strain ATCC 700532 / DSM 15464 / FAM18).